Reading from the N-terminus, the 268-residue chain is Small ribosomal subunit protein uS3 (268 aa).

Positions 40-110 (IRNLFFINYR…KLDLTINEIG (71 aa)) constitute a KH type-2 domain.

The protein belongs to the universal ribosomal protein uS3 family. Part of the 30S ribosomal subunit. Forms a tight complex with proteins S10 and S14.

In terms of biological role, binds the lower part of the 30S subunit head. Binds mRNA in the 70S ribosome, positioning it for translation. This chain is Small ribosomal subunit protein uS3, found in Mycoplasma genitalium (strain ATCC 33530 / DSM 19775 / NCTC 10195 / G37) (Mycoplasmoides genitalium).